The chain runs to 26 residues: Toxin b subunit alpha (26 aa).

In terms of assembly, toxin b is a heterodimer composed of toxin alpha and toxin beta. In terms of tissue distribution, expressed by the venom gland.

The protein localises to the secreted. Its function is as follows. Binds to sodium channels (Nav) and affects the channel activation process. The sequence is that of Toxin b subunit alpha from Androctonus crassicauda (Arabian fat-tailed scorpion).